Reading from the N-terminus, the 338-residue chain is DNA-directed RNA polymerase subunit alpha (338 aa).

Residues 1-233 are alpha N-terminal domain (alpha-NTD); it reads MLREEVAVST…DLFIPFLHAE (233 aa). The tract at residues 266 to 338 is alpha C-terminal domain (alpha-CTD); sequence IALKFIFIDQ…IDLPKNKFSN (73 aa).

The protein belongs to the RNA polymerase alpha chain family. As to quaternary structure, in plastids the minimal PEP RNA polymerase catalytic core is composed of four subunits: alpha, beta, beta', and beta''. When a (nuclear-encoded) sigma factor is associated with the core the holoenzyme is formed, which can initiate transcription.

It is found in the plastid. The protein localises to the chloroplast. It catalyses the reaction RNA(n) + a ribonucleoside 5'-triphosphate = RNA(n+1) + diphosphate. Functionally, DNA-dependent RNA polymerase catalyzes the transcription of DNA into RNA using the four ribonucleoside triphosphates as substrates. The sequence is that of DNA-directed RNA polymerase subunit alpha from Nandina domestica (Heavenly bamboo).